Reading from the N-terminus, the 59-residue chain is Large ribosomal subunit protein bL25 (59 aa).

The protein belongs to the bacterial ribosomal protein bL25 family.

The chain is Large ribosomal subunit protein bL25 (ctc) from Bacillus caldolyticus.